The primary structure comprises 876 residues: Radial spoke head 10 homolog B (876 aa).

A compositionally biased stretch (basic and acidic residues) spans 1-16 (MVKEKKKADKKGDKSA). The tract at residues 1–71 (MVKEKKKADK…VQMEQSEEET (71 aa)) is disordered. Residues 17 to 37 (RSPSSISDNPEASKQDSNASK) are compositionally biased toward polar residues. A compositionally biased stretch (low complexity) spans 39–50 (EVAPSAVVPVVE). MORN repeat units lie at residues 86-108 (YEGEKVRGLYEGEGFAVFQGGNT), 109-129 (YHGMFSEGLMHGQGTYIWADG), 132-154 (YEGDFVKNIPMNHGVYTWPDGST), 155-172 (YEGEVTNGMRNGFGMFKC), 179-196 (YIGHWCHGKRHGKGSIYY), 204-225 (YEGDWVYNIKKGWGIRCYKSGN), 227-244 (YEGQWENNMRHGEGRMRW), 251-268 (YTGHWEKGIQNGFGTHTW), 284-305 (YIGEFVNGFRHGQGKFYYASGA), and 307-328 (YEGEWASNKKQGRGRMTFKNGH). The span at 356–372 (WSDASQRSRQPRGSSVS) shows a compositional bias: polar residues. The tract at residues 356–386 (WSDASQRSRQPRGSSVSAVREPETLRKLDGS) is disordered. A compositionally biased stretch (basic and acidic residues) spans 375 to 386 (REPETLRKLDGS). Residues 790–832 (LKEKVKENQLQEAELAQQRQIENEELEARLNILREEEARKQDF) adopt a coiled-coil conformation. The segment at 839-876 (LKEPSEIPASQPLTPSPPKEDLASIQTSKASPGKKKKK) is disordered.

Interacts with RSPH6A. Does not appear to be part of the axonemal radial spoke complexes 1 or 2. In terms of tissue distribution, expressed in ependymal cells (at protein level).

It localises to the cytoplasm. Its subcellular location is the cytoskeleton. It is found in the cilium axoneme. The protein resides in the cell projection. The protein localises to the cilium. It localises to the flagellum. In terms of biological role, may function as part of the axonemal radial spoke complex 3 (RS3). Radial spoke complexes are important for ciliary motility. In Mus musculus (Mouse), this protein is Radial spoke head 10 homolog B.